The chain runs to 339 residues: Cathepsin B (339 aa).

Residues 1 to 17 form the signal peptide; it reads MWQLWASLCCLLVLANA. The propeptide at 18–79 is activation peptide; sequence RSRPSFHPLS…QRVMFTEDLK (62 aa). Intrachain disulfides connect cysteine 93–cysteine 122, cysteine 105–cysteine 150, cysteine 141–cysteine 207, cysteine 142–cysteine 146, cysteine 179–cysteine 211, and cysteine 187–cysteine 198. The active site involves cysteine 108. The N-linked (GlcNAc...) asparagine glycan is linked to asparagine 192. Lysine 220 carries the post-translational modification N6-acetyllysine. Residues histidine 278 and asparagine 298 contribute to the active site. A propeptide spanning residues 334–339 is cleaved from the precursor; sequence QYWEKI.

It belongs to the peptidase C1 family. In terms of assembly, dimer of a heavy chain and a light chain cross-linked by a disulfide bond. Interacts with SRPX2. Directly interacts with SHKBP1. Expressed in the stratum spinosum of the epidermis. Weak expression is detected in the stratum granulosum.

Its subcellular location is the lysosome. It is found in the melanosome. The protein localises to the secreted. It localises to the extracellular space. The protein resides in the apical cell membrane. The catalysed reaction is Hydrolysis of proteins with broad specificity for peptide bonds. Preferentially cleaves -Arg-Arg-|-Xaa bonds in small molecule substrates (thus differing from cathepsin L). In addition to being an endopeptidase, shows peptidyl-dipeptidase activity, liberating C-terminal dipeptides.. Its activity is regulated as follows. Inhibited by leupeptin. Functionally, thiol protease which is believed to participate in intracellular degradation and turnover of proteins. Cleaves matrix extracellular phosphoglycoprotein MEPE. Involved in the solubilization of cross-linked TG/thyroglobulin in the thyroid follicle lumen. Has also been implicated in tumor invasion and metastasis. In Homo sapiens (Human), this protein is Cathepsin B (CTSB).